A 340-amino-acid chain; its full sequence is Probable quinone oxidoreductase (340 aa).

Belongs to the zinc-containing alcohol dehydrogenase family. Quinone oxidoreductase subfamily.

It carries out the reaction 2 a quinone + NADPH + H(+) = 2 a 1,4-benzosemiquinone + NADP(+). This is Probable quinone oxidoreductase from Leishmania amazonensis.